The following is a 785-amino-acid chain: Probable cationic amino acid transporter (785 aa).

15 consecutive transmembrane segments (helical) span residues 58 to 78 (LVSL…SGLV), 83 to 103 (AGPG…LSGV), 119 to 141 (AYTY…NLIL), 187 to 207 (YPDI…ALGV), 216 to 236 (VLNV…LFFV), 251 to 271 (WSGV…FDII), 291 to 311 (ASLV…TLMV), 337 to 357 (IVAI…LFPM), 360 to 380 (VIYA…VSTY), 384 to 404 (PAVA…LVSL), 407 to 427 (LIEM…VCVL), 568 to 588 (CVVL…FGSG), 596 to 616 (WAVL…FIII), 628 to 648 (MAPC…YLML), and 655 to 675 (WIRF…YGMW). The tract at residues 715–785 (DQGPFQNWGK…VDDDLDDPLE (71 aa)) is disordered. Low complexity predominate over residues 727–740 (QQKQPQQEQSEPQS). Residues 775-785 (VVDDDLDDPLE) are compositionally biased toward acidic residues.

Belongs to the amino acid-polyamine-organocation (APC) superfamily.

It localises to the lysosome membrane. Functionally, may be involved in arginine transport. This is Probable cationic amino acid transporter (slc7a14a) from Danio rerio (Zebrafish).